The sequence spans 290 residues: Agroclavine dehydrogenase (290 aa).

This sequence belongs to the fgaFS/easG family. As to quaternary structure, monomer.

The enzyme catalyses agroclavine + NADP(+) = didehydroagroclavine + NADPH + H(+). It functions in the pathway alkaloid biosynthesis; ergot alkaloid biosynthesis. Functionally, agroclavine dehydrogenase; part of the gene cluster that mediates the biosynthesis of fungal ergot alkaloid. DmaW catalyzes the first step of ergot alkaloid biosynthesis by condensing dimethylallyl diphosphate (DMAP) and tryptophan to form 4-dimethylallyl-L-tryptophan. The second step is catalyzed by the methyltransferase easF that methylates 4-dimethylallyl-L-tryptophan in the presence of S-adenosyl-L-methionine, resulting in the formation of 4-dimethylallyl-L-abrine. The catalase easC and the FAD-dependent oxidoreductase easE then transform 4-dimethylallyl-L-abrine to chanoclavine-I which is further oxidized by easD in the presence of NAD(+), resulting in the formation of chanoclavine-I aldehyde. Agroclavine dehydrogenase easG then mediates the conversion of chanoclavine-I aldehyde to agroclavine via a non-enzymatic adduct reaction: the substrate is an iminium intermediate that is formed spontaneously from chanoclavine-I aldehyde in the presence of glutathione. The presence of easA is not required to complete this reaction. Further conversion of agroclavine to paspalic acid is a two-step process involving oxidation of agroclavine to elymoclavine and of elymoclavine to paspalic acid, the second step being performed by the elymoclavine oxidase cloA. Paspalic acid is then further converted to D-lysergic acid. Ergopeptines are assembled from D-lysergic acid and three different amino acids by the D-lysergyl-peptide-synthetases composed each of a monomudular and a trimodular nonribosomal peptide synthetase subunit. LpsB and lpsC encode the monomodular subunits responsible for D-lysergic acid activation and incorporation into the ergopeptine backbone. LpsA1 and A2 subunits encode the trimodular nonribosomal peptide synthetase assembling the tripeptide portion of ergopeptines. LpsA1 is responsible for formation of the major ergopeptine, ergotamine, and lpsA2 for alpha-ergocryptine, the minor ergopeptine of the total alkaloid mixture elaborated by C.purpurea. D-lysergyl-tripeptides are assembled by the nonribosomal peptide synthetases and released as N-(D-lysergyl-aminoacyl)-lactams. Cyclolization of the D-lysergyl-tripeptides is performed by the Fe(2+)/2-ketoglutarate-dependent dioxygenase easH which introduces a hydroxyl group into N-(D-lysergyl-aminoacyl)-lactam at alpha-C of the aminoacyl residue followed by spontaneous condensation with the terminal lactam carbonyl group. The chain is Agroclavine dehydrogenase from Claviceps purpurea (strain 20.1) (Ergot fungus).